Here is a 222-residue protein sequence, read N- to C-terminus: Cytidylate kinase (222 aa).

9–17 contributes to the ATP binding site; it reads GPAGSGKTT.

This sequence belongs to the cytidylate kinase family. Type 1 subfamily.

The protein localises to the cytoplasm. The enzyme catalyses CMP + ATP = CDP + ADP. It catalyses the reaction dCMP + ATP = dCDP + ADP. This is Cytidylate kinase from Thermosipho africanus (strain TCF52B).